We begin with the raw amino-acid sequence, 457 residues long: D-xylose transporter (457 aa).

10 helical membrane passes run 14 to 34, 46 to 66, 81 to 101, 104 to 124, 131 to 151, 164 to 184, 244 to 264, 281 to 301, 309 to 329, and 338 to 358; these read ALGGLLFGYDTGVISGAILFI, GWVVSAVLLGAILGAAIIGPS, IIFFVGALGSAFSPEFWTLII, IILGMAVGAASALIPTYLAEL, GTVSSLFQLMVMTGILLAYIT, WMLGFAAIPAALLFLGGLILP, LIIGIGLAIFQQVMGCNTVLY, LLAHIGIGIFNVIVTAIAVAI, KIVNIGAVGMGISLFVMSIGM, and AAIISVIALTVYIAFFSATWG. Gln-138 is a beta-D-xylose binding site. Residues 254 to 255 and Asn-260 contribute to the beta-D-xylose site; that span reads QQ. Residues Trp-362 and Asn-385 each contribute to the beta-D-xylose site. Transmembrane regions (helical) follow at residues 380 to 400 and 402 to 422; these read FASVINWTANMIVSLTFPSLL and FFGTGSLFIGYGILCFASIWF.

The protein belongs to the major facilitator superfamily. Sugar transporter (TC 2.A.1.1) family.

The protein localises to the cell membrane. With respect to regulation, transport is inhibited by 6-deoxy-D-glucose. Uptake of D-xylose across the boundary membrane with the concomitant transport of protons into the cell (symport system). Transport is driven by the proton motive force generated by either malolactic fermentation or by the metabolism of D-glucose. The polypeptide is D-xylose transporter (Levilactobacillus brevis (Lactobacillus brevis)).